The chain runs to 221 residues: MNVGVIVFPGSNCDRDVQWVTAGLLGQSTRMIWHEERDLSGLDLIVVPGGFSYGDYLRCGAIARFSPAMQATVAFAEAGGLVLGICNGFQILTEVGLLPGALVRNRDLHFRCETTPLRVERSDRPWSRTYQQGQILNLPIAHGEGRYHADPATLAALEANGQVLFRYLDNPNGSCNDIAGITNVAGNVLGMMPHPERAAEAIAGSVDGLGLFAGLLEPVAA.

Residues 2–221 (NVGVIVFPGS…FAGLLEPVAA (220 aa)) form the Glutamine amidotransferase type-1 domain. The Nucleophile role is filled by C86. Residues H194 and E196 contribute to the active site.

As to quaternary structure, part of the FGAM synthase complex composed of 1 PurL, 1 PurQ and 2 PurS subunits.

It localises to the cytoplasm. It catalyses the reaction N(2)-formyl-N(1)-(5-phospho-beta-D-ribosyl)glycinamide + L-glutamine + ATP + H2O = 2-formamido-N(1)-(5-O-phospho-beta-D-ribosyl)acetamidine + L-glutamate + ADP + phosphate + H(+). It carries out the reaction L-glutamine + H2O = L-glutamate + NH4(+). It participates in purine metabolism; IMP biosynthesis via de novo pathway; 5-amino-1-(5-phospho-D-ribosyl)imidazole from N(2)-formyl-N(1)-(5-phospho-D-ribosyl)glycinamide: step 1/2. Functionally, part of the phosphoribosylformylglycinamidine synthase complex involved in the purines biosynthetic pathway. Catalyzes the ATP-dependent conversion of formylglycinamide ribonucleotide (FGAR) and glutamine to yield formylglycinamidine ribonucleotide (FGAM) and glutamate. The FGAM synthase complex is composed of three subunits. PurQ produces an ammonia molecule by converting glutamine to glutamate. PurL transfers the ammonia molecule to FGAR to form FGAM in an ATP-dependent manner. PurS interacts with PurQ and PurL and is thought to assist in the transfer of the ammonia molecule from PurQ to PurL. In Synechococcus sp. (strain ATCC 27144 / PCC 6301 / SAUG 1402/1) (Anacystis nidulans), this protein is Phosphoribosylformylglycinamidine synthase subunit PurQ.